The chain runs to 772 residues: MTHTRRKSLPMLSSGPTGRGEPLQMEDSNMEQGTEDVEPGMPESPGHLTGRRKNYPLRKRSLVPEKPKACKVLLTRLENVAGPRSADEADELPPDLPKPPSPTSSSEDAGLVQPRKRRLASLNAEALNNLLLEREETSSLAGARRSRGGDPHRSRDRATGSWSFSKKRPRLGDLGEGSRDLSPELAPDEGARRDGDPAPKRLASLNAAAFLKLSQERELPLRPSRAQAEADGRSTEPLAPRILRPKVNGKNCPKARQGAGSGEATGPPNWQEQPDERWPSAPPHGPPTQPSHQAPGKALENPLRPNLPLLMGGQAALKPEPGRPGEESPAPKQELHQPSFPAPQLSPLPMPGNPADYSGPCGGPELTALGSFYLYCGQDGLQCGAYSPCPMLPEGKLSPVAAPNEGLLMAPSSVPSGVPFQHPPWSAPRYCSSEDTGANGYSICGVLPLSLTHIGTTCGGCPYKMPFTAEGCRSLGQLEFPLPEAGHPASPAHPLLGCPVPSVPPAAEPIPHLQTPISEPQTVARACPQSAKPPSGSKSGLRTGSSCRHTVRSKAARRPSHPKQPRAQRPRPRRRRRRRTNGWVPVGAACEKAVYVLDEPEPAIRKSYQAVERHGETIRVRDTVLLKSGPRKTSTPYVAKISALWENPESGELMMSLLWYYRPEHLQGGRSPSMHEPLQNEVFASRHQDQNSVACIEEKCYVLTFAEYCRFCAMAKRRGEGLPSRKTALVPPSADYSTPPHRTVPEDTDPELVFLCRHVYDFRHGRILKNPQ.

2 disordered regions span residues methionine 1–valine 63 and leucine 77–arginine 117. A Phosphoserine modification is found at serine 8. Basic residues predominate over residues threonine 49–serine 61. 2 positions are modified to phosphoserine: serine 101 and serine 121. Disordered regions lie at residues leucine 131–tyrosine 357, glutamine 521–glycine 582, and proline 723–threonine 743. 3 stretches are compositionally biased toward basic and acidic residues: residues arginine 147–alanine 158, arginine 170–serine 182, and glutamate 189–proline 199. Serine 182 carries the post-translational modification Phosphoserine. Phosphoserine is present on serine 204. Residues serine 280–glutamine 289 show a composition bias toward pro residues. A compositionally biased stretch (low complexity) spans leucine 299 to leucine 310. Positions phenylalanine 340 to glycine 352 are enriched in pro residues. Over residues glycine 536–arginine 548 the composition is skewed to polar residues. Over residues histidine 549–threonine 580 the composition is skewed to basic residues. A Phosphothreonine modification is found at threonine 580. Residues glutamate 616–proline 771 form the BAH domain.

Interacts with CBX5 (HP1 alpha), HDAC5, MBD1 and SP1. Ubiquitinated in a FBXO11-dependent manner; leading to degradation.

It localises to the nucleus. It is found in the chromosome. Its function is as follows. Heterochromatin protein that acts as a transcription repressor and has the ability to promote the formation of large heterochromatic domains. May act by recruiting heterochromatin proteins such as CBX5 (HP1 alpha), HDAC5 and MBD1. Represses IGF2 expression by binding to its CpG-rich P3 promoter and recruiting heterochromatin proteins. The chain is Bromo adjacent homology domain-containing 1 protein (Bahd1) from Mus musculus (Mouse).